Consider the following 254-residue polypeptide: Ciliary microtubule associated protein 1A (254 aa).

2 STPGR repeats span residues Pro180 to Arg205 and Pro216 to Lys241. The segment at Glu207–Val226 is disordered.

It belongs to the CIMAP family. As to quaternary structure, microtubule inner protein component of sperm flagellar doublet microtubules.

The protein resides in the cytoplasm. Its subcellular location is the cytoskeleton. The protein localises to the flagellum axoneme. Functionally, outer dense fibers are filamentous structures located on the outside of the axoneme in the midpiece and principal piece of the mammalian sperm tail. May help to maintain the passive elastic structures and elastic recoil of the sperm tail. This chain is Ciliary microtubule associated protein 1A (CIMAP1A), found in Bos taurus (Bovine).